The primary structure comprises 288 residues: Elongation factor Ts (288 aa).

The involved in Mg(2+) ion dislocation from EF-Tu stretch occupies residues T82 to V85.

This sequence belongs to the EF-Ts family.

It is found in the cytoplasm. Its function is as follows. Associates with the EF-Tu.GDP complex and induces the exchange of GDP to GTP. It remains bound to the aminoacyl-tRNA.EF-Tu.GTP complex up to the GTP hydrolysis stage on the ribosome. In Chlorobium chlorochromatii (strain CaD3), this protein is Elongation factor Ts.